The primary structure comprises 121 residues: Large ribosomal subunit protein bL20 (121 aa).

The protein belongs to the bacterial ribosomal protein bL20 family.

In terms of biological role, binds directly to 23S ribosomal RNA and is necessary for the in vitro assembly process of the 50S ribosomal subunit. It is not involved in the protein synthesizing functions of that subunit. In Methylorubrum populi (strain ATCC BAA-705 / NCIMB 13946 / BJ001) (Methylobacterium populi), this protein is Large ribosomal subunit protein bL20.